The chain runs to 184 residues: UPF0398 protein BCAH820_1652 (184 aa).

This sequence belongs to the UPF0398 family.

The sequence is that of UPF0398 protein BCAH820_1652 from Bacillus cereus (strain AH820).